The primary structure comprises 464 residues: UDP-N-acetylmuramoylalanine--D-glutamate ligase (464 aa).

Glycine 112–threonine 118 contributes to the ATP binding site.

The protein belongs to the MurCDEF family.

Its subcellular location is the cytoplasm. The enzyme catalyses UDP-N-acetyl-alpha-D-muramoyl-L-alanine + D-glutamate + ATP = UDP-N-acetyl-alpha-D-muramoyl-L-alanyl-D-glutamate + ADP + phosphate + H(+). It functions in the pathway cell wall biogenesis; peptidoglycan biosynthesis. Functionally, cell wall formation. Catalyzes the addition of glutamate to the nucleotide precursor UDP-N-acetylmuramoyl-L-alanine (UMA). This is UDP-N-acetylmuramoylalanine--D-glutamate ligase from Chlorobium phaeobacteroides (strain DSM 266 / SMG 266 / 2430).